Consider the following 237-residue polypeptide: Ribosomal RNA small subunit methyltransferase G (237 aa).

S-adenosyl-L-methionine-binding positions include Gly-78, Phe-83, 129 to 130 (AE), and Arg-148.

It belongs to the methyltransferase superfamily. RNA methyltransferase RsmG family.

It localises to the cytoplasm. In terms of biological role, specifically methylates the N7 position of a guanine in 16S rRNA. The sequence is that of Ribosomal RNA small subunit methyltransferase G from Clostridium kluyveri (strain ATCC 8527 / DSM 555 / NBRC 12016 / NCIMB 10680 / K1).